Consider the following 130-residue polypeptide: Small ribosomal subunit protein uS9 (130 aa).

The protein belongs to the universal ribosomal protein uS9 family.

In Pasteurella multocida (strain Pm70), this protein is Small ribosomal subunit protein uS9.